The chain runs to 197 residues: Nucleoid occlusion factor SlmA (197 aa).

Residues 7–67 (INRREHILQC…GLIEFIEESL (61 aa)) enclose the HTH tetR-type domain. Positions 30 to 49 (TTAKLASEVGVSEAALYRHF) form a DNA-binding region, H-T-H motif.

This sequence belongs to the nucleoid occlusion factor SlmA family. Homodimer. Interacts with FtsZ.

Its subcellular location is the cytoplasm. The protein resides in the nucleoid. Functionally, required for nucleoid occlusion (NO) phenomenon, which prevents Z-ring formation and cell division over the nucleoid. Acts as a DNA-associated cell division inhibitor that binds simultaneously chromosomal DNA and FtsZ, and disrupts the assembly of FtsZ polymers. SlmA-DNA-binding sequences (SBS) are dispersed on non-Ter regions of the chromosome, preventing FtsZ polymerization at these regions. The polypeptide is Nucleoid occlusion factor SlmA (Shewanella oneidensis (strain ATCC 700550 / JCM 31522 / CIP 106686 / LMG 19005 / NCIMB 14063 / MR-1)).